Here is a 350-residue protein sequence, read N- to C-terminus: Inner membrane protein YhiM (350 aa).

The Cytoplasmic portion of the chain corresponds to 1 to 2; the sequence is MN. Residues 3–23 traverse the membrane as a helical segment; the sequence is IYIGWLFKLIPLIMGLICIAL. The Periplasmic portion of the chain corresponds to 24–41; that stretch reads GGFVLESSGQSEYFVAGH. The helical transmembrane segment at 42 to 62 threads the bilayer; sequence VLISLAAICLALFTTAFIIIS. The Cytoplasmic segment spans residues 63–74; sequence QLTRGVNTFYNT. A helical transmembrane segment spans residues 75–95; the sequence is LFPIIGYAGSIITMIWGWALL. The Periplasmic segment spans residues 96-104; that stretch reads AGNDVMADE. A helical transmembrane segment spans residues 105–125; the sequence is FVAGHVIFGVGMIAACVSTVA. At 126–157 the chain is on the cytoplasmic side; that stretch reads ASSGHFLLIPKNAAGSKSDGTPVQAYSSLIGN. The chain crosses the membrane as a helical span at residues 158–178; it reads CLIAVPVLLTLLGFIWSITLL. At 179 to 190 the chain is on the periplasmic side; it reads RSADITPHYVAG. Residues 191-211 form a helical membrane-spanning segment; it reads HVLLGLTAICACLIGLVATIV. The Cytoplasmic portion of the chain corresponds to 212–225; sequence HQTRNTFSTKEHWL. A helical membrane pass occupies residues 226–246; that stretch reads WCYWVIFLGSITVLQGIYVLV. Residues 247–257 lie on the Periplasmic side of the membrane; that stretch reads SSDASARLAPG. A helical transmembrane segment spans residues 258 to 278; it reads IILICLGMICYSIFSKVWLLA. The Cytoplasmic portion of the chain corresponds to 279–290; sequence LVWRRTCSLANR. Residues 291-311 traverse the membrane as a helical segment; the sequence is IPMIPVFTCLFCLFLASFLAE. Residues 312–324 are Periplasmic-facing; that stretch reads MAQTDMGYFIPSR. The chain crosses the membrane as a helical span at residues 325–345; sequence VLVGLGAVCFTLFSIVSILEA. At 346–350 the chain is on the cytoplasmic side; it reads GSAKK.

The protein resides in the cell inner membrane. The protein is Inner membrane protein YhiM (yhiM) of Escherichia coli (strain K12).